The primary structure comprises 523 residues: Succinate-semialdehyde dehydrogenase, mitochondrial (523 aa).

A mitochondrion-targeting transit peptide spans 1–35 (MATCFLLRNFCAARPALRPPGRLLREPAGAQRRSY). Lysine 114 is modified (N6-acetyllysine; alternate). Residue lysine 114 is modified to N6-succinyllysine; alternate. An N6-succinyllysine mark is found at lysine 123 and lysine 172. Residues arginine 201 and 216–219 (KPAE) contribute to the NAD(+) site. Arginine 201 contacts substrate. An N6-acetyllysine; alternate modification is found at lysine 253. Lysine 253 carries the N6-succinyllysine; alternate modification. 272 to 277 (GSTATG) provides a ligand contact to NAD(+). The active-site Proton acceptor is glutamate 294. Arginine 322 lines the substrate pocket. Cysteine 328 serves as the catalytic Nucleophile. Cysteine 328 and cysteine 330 are oxidised to a cystine. Position 353 is an N6-acetyllysine (lysine 353). The residue at position 390 (lysine 390) is an N6-succinyllysine. Lysine 399 carries the post-translational modification N6-acetyllysine. Serine 486 serves as a coordination point for substrate. Serine 487 carries the post-translational modification Phosphoserine.

It belongs to the aldehyde dehydrogenase family. Homotetramer. As to expression, brain, pancreas, heart, liver, skeletal muscle, kidney. Lower in spleen, lung, kidney and testis.

It is found in the mitochondrion. It carries out the reaction succinate semialdehyde + NAD(+) + H2O = succinate + NADH + 2 H(+). The protein operates within amino-acid degradation; 4-aminobutanoate degradation. Redox-regulated. Inhibited under oxydizing conditions. Functionally, catalyzes one step in the degradation of the inhibitory neurotransmitter gamma-aminobutyric acid (GABA). The protein is Succinate-semialdehyde dehydrogenase, mitochondrial (Aldh5a1) of Rattus norvegicus (Rat).